The primary structure comprises 510 residues: MIWHVQNENFILDSTRIFMKAFHLLLFHGSFILPECILIFGLILLLMIDSTSDQKDIPWLYFISSTSLVMSITALLFRWKEEPMISFSGNFQTNNFNEIFQFLILLCSTLCIPLSVEYIECTEMAITEFLLFVLTATLGGMFLCGANDSITIFVAPECFSLCSYLLSGYTKRDVRSNEATTKYLLMGGASSSILVHGFSWLYGSSGGEIELQEIVNGLINTQMYNSPGISIALIFITVGIGFKLSPAPFHQWTPDVYEGSPTPVVAFLSVTSKVAASASATRIFDIPFYFSSNEWHLLLEILAILSMILGNLVAITQTSMKRMLAYSSIGQIGYVIIGIIVGDSNDGYASMITYMLFYISMNLGTFARIVSFGLRTGTDNIRDYAGLYTKDPFLALSSALCLLSLGGLPPLAGFFGKLHLFWCGWQAGLYFLVSIGLLTSVVSIYYYLKIIKLLMTGRNQEITPHVRNYRRSPLRSNNSIELSMIVCVIASTIPGISMNPIIAIAQDTLF.

13 consecutive transmembrane segments (helical) span residues 24–44, 57–77, 99–119, 124–144, 150–170, 183–203, 229–249, 295–315, 323–343, 347–367, 395–415, 418–438, and 484–504; these read LLLF…GLIL, IPWL…ALLF, IFQF…VEYI, MAIT…MFLC, ITIF…SGYT, YLLM…WLYG, ISIA…PAPF, WHLL…LVAI, MLAY…IVGD, GYAS…GTFA, ALSS…AGFF, LHLF…IGLL, and MIVC…IIAI.

Belongs to the complex I subunit 2 family. As to quaternary structure, NDH is composed of at least 16 different subunits, 5 of which are encoded in the nucleus.

It is found in the plastid. It localises to the chloroplast thylakoid membrane. The catalysed reaction is a plastoquinone + NADH + (n+1) H(+)(in) = a plastoquinol + NAD(+) + n H(+)(out). It carries out the reaction a plastoquinone + NADPH + (n+1) H(+)(in) = a plastoquinol + NADP(+) + n H(+)(out). In terms of biological role, NDH shuttles electrons from NAD(P)H:plastoquinone, via FMN and iron-sulfur (Fe-S) centers, to quinones in the photosynthetic chain and possibly in a chloroplast respiratory chain. The immediate electron acceptor for the enzyme in this species is believed to be plastoquinone. Couples the redox reaction to proton translocation, and thus conserves the redox energy in a proton gradient. In Ceratophyllum demersum (Rigid hornwort), this protein is NAD(P)H-quinone oxidoreductase subunit 2 B, chloroplastic.